The sequence spans 811 residues: DEP domain-containing protein 1A (811 aa).

The DEP domain maps to 24–108 (FRAGMPLRKH…DNNQLFRFPA (85 aa)). Positions 281-321 (DYFLDLPEPLLTFEYYELFVNILVVCGYITVSDRSSGIHKI) constitute a Rho-GAP domain. Ser-512 is subject to Phosphoserine. The interval 598 to 653 (AIDALQLCCLLLPPPNRRKLQLLMRMISRMSQNVDMPKLHDAMGTRSLMIHTFSRC) is interaction with ZNF224.

In terms of assembly, isoform 2 and isoform 5 can form homodimers and heterodimers. Interacts with ZNF224. Expressed in testis. Up-regulated in bladder cancer cells (at protein level).

It is found in the nucleus. In terms of biological role, may be involved in transcriptional regulation as a transcriptional corepressor. The DEPDC1A-ZNF224 complex may play a critical role in bladder carcinogenesis by repressing the transcription of the A20 gene, leading to transport of NF-KB protein into the nucleus, resulting in suppression of apoptosis of bladder cancer cells. This chain is DEP domain-containing protein 1A (DEPDC1), found in Homo sapiens (Human).